Consider the following 128-residue polypeptide: MAKYTNEELIEAFKEMTLVELTEFKNLFEETFDVTAAAPVAVAAAGAAGGEAAAEEEKDEFDVVLEDAGAKKIGVIKVVREVVSGLGLKEAKDLVESAPKAILEGASKDDAEAAKTKLEEAGAKVSLK.

Belongs to the bacterial ribosomal protein bL12 family. In terms of assembly, homodimer. Part of the ribosomal stalk of the 50S ribosomal subunit. Forms a multimeric L10(L12)X complex, where L10 forms an elongated spine to which 2 to 4 L12 dimers bind in a sequential fashion. Binds GTP-bound translation factors.

In terms of biological role, forms part of the ribosomal stalk which helps the ribosome interact with GTP-bound translation factors. Is thus essential for accurate translation. In Corynebacterium kroppenstedtii (strain DSM 44385 / JCM 11950 / CIP 105744 / CCUG 35717), this protein is Large ribosomal subunit protein bL12.